We begin with the raw amino-acid sequence, 438 residues long: UDP-N-acetylmuramoylalanine--D-glutamate ligase (438 aa).

112–118 lines the ATP pocket; that stretch reads GSNGKST.

It belongs to the MurCDEF family.

It is found in the cytoplasm. The enzyme catalyses UDP-N-acetyl-alpha-D-muramoyl-L-alanine + D-glutamate + ATP = UDP-N-acetyl-alpha-D-muramoyl-L-alanyl-D-glutamate + ADP + phosphate + H(+). Its pathway is cell wall biogenesis; peptidoglycan biosynthesis. Cell wall formation. Catalyzes the addition of glutamate to the nucleotide precursor UDP-N-acetylmuramoyl-L-alanine (UMA). The sequence is that of UDP-N-acetylmuramoylalanine--D-glutamate ligase from Salmonella paratyphi A (strain ATCC 9150 / SARB42).